The primary structure comprises 137 residues: uncharacterized protein (137 aa).

Positions 4-118 (YEGNCLCKAI…CIDDKPDCYD (115 aa)) constitute a CENP-V/GFA domain. Residues Cys8, Cys10, Cys27, Cys29, Cys32, Cys71, and Cys74 each coordinate Zn(2+).

It belongs to the Gfa family. Requires Zn(2+) as cofactor.

Its subcellular location is the cytoplasm. The protein localises to the nucleus. This is an uncharacterized protein from Schizosaccharomyces pombe (strain 972 / ATCC 24843) (Fission yeast).